Here is an 84-residue protein sequence, read N- to C-terminus: uncharacterized protein (84 aa).

This is an uncharacterized protein from Lepidoptera (butterflies and moths).